Consider the following 294-residue polypeptide: MHNIFKGLITAAITPFKDNTLDLDALEKILEHQIKYEVDGVLIAGSTGECSNLSFEEYKLLLQTSLEIVNKRIPIISGCSSNNTAYARELAAESTKIGVDGFMASPPSYIKPTQEGIYKHFEALHEACNIPIMLYSAPTRSGVDFSDETILRLSKLSRILALKDCGVDLERPMRIRTIVKEDFNLLTGNDEVVLAFNAQGGVGWVSVASNIVPNICKELLEKWYKNDVKEALEIHQRLLPLYKALFVESNPIPIKYAAHYLGLCANKIRLPLTEASYKTKKQIENIITSLSIKI.

Thr47 contributes to the pyruvate binding site. Tyr135 acts as the Proton donor/acceptor in catalysis. Residue Lys163 is the Schiff-base intermediate with substrate of the active site. Pyruvate is bound at residue Val205.

The protein belongs to the DapA family. As to quaternary structure, homotetramer; dimer of dimers.

Its subcellular location is the cytoplasm. It carries out the reaction L-aspartate 4-semialdehyde + pyruvate = (2S,4S)-4-hydroxy-2,3,4,5-tetrahydrodipicolinate + H2O + H(+). It participates in amino-acid biosynthesis; L-lysine biosynthesis via DAP pathway; (S)-tetrahydrodipicolinate from L-aspartate: step 3/4. In terms of biological role, catalyzes the condensation of (S)-aspartate-beta-semialdehyde [(S)-ASA] and pyruvate to 4-hydroxy-tetrahydrodipicolinate (HTPA). This Rickettsia canadensis (strain McKiel) protein is 4-hydroxy-tetrahydrodipicolinate synthase.